Here is a 417-residue protein sequence, read N- to C-terminus: Serine hydroxymethyltransferase (417 aa).

(6S)-5,6,7,8-tetrahydrofolate-binding positions include Leu-121 and 125 to 127 (GHL). Lys-229 is subject to N6-(pyridoxal phosphate)lysine. 355 to 357 (SPF) lines the (6S)-5,6,7,8-tetrahydrofolate pocket.

It belongs to the SHMT family. Homodimer. The cofactor is pyridoxal 5'-phosphate.

The protein resides in the cytoplasm. It carries out the reaction (6R)-5,10-methylene-5,6,7,8-tetrahydrofolate + glycine + H2O = (6S)-5,6,7,8-tetrahydrofolate + L-serine. It functions in the pathway one-carbon metabolism; tetrahydrofolate interconversion. It participates in amino-acid biosynthesis; glycine biosynthesis; glycine from L-serine: step 1/1. Its function is as follows. Catalyzes the reversible interconversion of serine and glycine with tetrahydrofolate (THF) serving as the one-carbon carrier. This reaction serves as the major source of one-carbon groups required for the biosynthesis of purines, thymidylate, methionine, and other important biomolecules. Also exhibits THF-independent aldolase activity toward beta-hydroxyamino acids, producing glycine and aldehydes, via a retro-aldol mechanism. This is Serine hydroxymethyltransferase from Shewanella sp. (strain ANA-3).